The chain runs to 294 residues: Ribosomal protein L11 methyltransferase (294 aa).

Thr146, Gly167, Asp189, and Asn231 together coordinate S-adenosyl-L-methionine.

It belongs to the methyltransferase superfamily. PrmA family.

The protein resides in the cytoplasm. It catalyses the reaction L-lysyl-[protein] + 3 S-adenosyl-L-methionine = N(6),N(6),N(6)-trimethyl-L-lysyl-[protein] + 3 S-adenosyl-L-homocysteine + 3 H(+). In terms of biological role, methylates ribosomal protein L11. The chain is Ribosomal protein L11 methyltransferase from Photobacterium profundum (strain SS9).